Here is a 219-residue protein sequence, read N- to C-terminus: Adenylate kinase (219 aa).

10 to 15 (GAGKGT) is a binding site for ATP. The interval 30–59 (STGDMLRAAVKAETPVGLEAKKVMDAGQLV) is NMP. AMP is bound by residues Thr-31, Arg-36, 57–59 (QLV), 85–88 (GFPR), and Gln-92. Positions 122–159 (GRRVHLSSGRTYHVLFNPPKQEGLDDETGEPLVQRADD) are LID. Residues Arg-123 and 132-133 (TY) contribute to the ATP site. Residues Arg-156 and Arg-167 each contribute to the AMP site. An ATP-binding site is contributed by Gly-203.

It belongs to the adenylate kinase family. In terms of assembly, monomer.

The protein localises to the cytoplasm. It catalyses the reaction AMP + ATP = 2 ADP. Its pathway is purine metabolism; AMP biosynthesis via salvage pathway; AMP from ADP: step 1/1. Catalyzes the reversible transfer of the terminal phosphate group between ATP and AMP. Plays an important role in cellular energy homeostasis and in adenine nucleotide metabolism. The protein is Adenylate kinase of Chlorobium limicola (strain DSM 245 / NBRC 103803 / 6330).